Here is a 487-residue protein sequence, read N- to C-terminus: Selenium-binding protein 2 (487 aa).

At A2 the chain carries N-acetylalanine. Selenite is bound by residues C19 and C20.

This sequence belongs to the selenium-binding protein family. Mostly expressed in seedlings, leaves and stems, and, to a lower extent, in flowers and roots.

In terms of biological role, required for the fusion of female gametophyte polar nuclei. The protein is Selenium-binding protein 2 (SBP2) of Arabidopsis thaliana (Mouse-ear cress).